A 109-amino-acid chain; its full sequence is Nucleoid-associated protein VIBHAR_03086 (109 aa).

2 disordered regions span residues 1-21 and 88-109; these read MFGK…QDRM and QKEK…KMPF.

Belongs to the YbaB/EbfC family. Homodimer.

Its subcellular location is the cytoplasm. The protein localises to the nucleoid. Its function is as follows. Binds to DNA and alters its conformation. May be involved in regulation of gene expression, nucleoid organization and DNA protection. The polypeptide is Nucleoid-associated protein VIBHAR_03086 (Vibrio campbellii (strain ATCC BAA-1116)).